The primary structure comprises 450 residues: Ribosomal protein uS12 methylthiotransferase RimO (450 aa).

In terms of domain architecture, MTTase N-terminal spans 7 to 123 (QKVSMVSLGC…IAEILAEKSG (117 aa)). Residues Cys16, Cys52, Cys86, Cys161, Cys165, and Cys168 each contribute to the [4Fe-4S] cluster site. The Radical SAM core domain maps to 147–377 (SSPAWFSYLK…MRIQARLSFK (231 aa)). Positions 380-448 (RELIGTTEQV…DYDLIGEIQE (69 aa)) constitute a TRAM domain.

The protein belongs to the methylthiotransferase family. RimO subfamily. Requires [4Fe-4S] cluster as cofactor.

It is found in the cytoplasm. The enzyme catalyses L-aspartate(89)-[ribosomal protein uS12]-hydrogen + (sulfur carrier)-SH + AH2 + 2 S-adenosyl-L-methionine = 3-methylsulfanyl-L-aspartate(89)-[ribosomal protein uS12]-hydrogen + (sulfur carrier)-H + 5'-deoxyadenosine + L-methionine + A + S-adenosyl-L-homocysteine + 2 H(+). Functionally, catalyzes the methylthiolation of an aspartic acid residue of ribosomal protein uS12. This is Ribosomal protein uS12 methylthiotransferase RimO from Pelobacter propionicus (strain DSM 2379 / NBRC 103807 / OttBd1).